Consider the following 313-residue polypeptide: Adhesin MafA 2 (313 aa).

A signal peptide spans 1–14 (MKTLLLLIPLVLTA). The N-palmitoyl cysteine moiety is linked to residue Cys-15. A lipid anchor (S-diacylglycerol cysteine) is attached at Cys-15. The segment covering 282 to 297 (GDTTAQNRPDFKQNNG) has biased composition (polar residues). The tract at residues 282-313 (GDTTAQNRPDFKQNNGKKPDVGNEVIRRRKGG) is disordered.

It belongs to the MafA family.

It localises to the cell outer membrane. The sequence is that of Adhesin MafA 2 (mafA2) from Neisseria meningitidis serogroup A / serotype 4A (strain DSM 15465 / Z2491).